Consider the following 191-residue polypeptide: COP9 signalosome complex subunit 8 (191 aa).

Residues 6–179 enclose the PCI domain; sequence MMAELDEKLL…VSLVPNEQQL (174 aa).

Belongs to the CSN8 family. As to quaternary structure, component of the CSN complex, probably composed of cops1, cops2, cops3, cops4, cops5, cops6, cops7, cops8 and cops9.

It localises to the cytoplasm. Its subcellular location is the nucleus. Component of the COP9 signalosome complex (CSN), a complex involved in various cellular and developmental processes. The CSN complex is an essential regulator of the ubiquitin (Ubl) conjugation pathway by mediating the deneddylation of the cullin subunits of E3 ligase complexes, leading to modify the Ubl ligase activity. This chain is COP9 signalosome complex subunit 8 (cops8), found in Danio rerio (Zebrafish).